The following is a 435-amino-acid chain: T-cell defective protein 2 (435 aa).

Residues 65–146 form a disordered region; sequence NASTSFQSQP…KTPDSLRKSI (82 aa). Residues 322-352 adopt a coiled-coil conformation; that stretch reads TKISAKKEKEQKKSAAKEAALKEAKEKEMRI. A disordered region spans residues 393-419; it reads FFKANPPPAPRAPQAPELASGPRRIPT.

As to expression, strongly expressed in the cytoplasm of the pharynx muscle cells and several head neurons, probably the IL1s or IL2s, throughout development. Also expressed in some other unidentified neurons in the tail region. Weakly expressed in the nuclei of the T-cells and the T-cell daughters. Not expressed in gonads and in P12 cell.

It is found in the nucleus. The protein localises to the cytoplasm. May act synergistically with the Wnt pathways to control T-cell fate specification, gonad development, and P12 cell fate specification. Required for the distribution of pop-1 and tlp-1 proteins. In Caenorhabditis elegans, this protein is T-cell defective protein 2 (tcl-2).